Here is a 426-residue protein sequence, read N- to C-terminus: Histone-binding protein RBBP7 (426 aa).

An N-acetylalanine modification is found at A2. S3 carries the phosphoserine modification. K4 carries the post-translational modification N6-acetyllysine; alternate. A Glycyl lysine isopeptide (Lys-Gly) (interchain with G-Cter in SUMO2); alternate cross-link involves residue K4. K4 is covalently cross-linked (Glycyl lysine isopeptide (Lys-Gly) (interchain with G-Cter in ubiquitin); alternate). T10 is modified (phosphothreonine). 7 WD repeats span residues 47-122 (QWLP…KINH), 128-173 (RARY…LRLR), 181-217 (GLSW…KIVD), 228-269 (VVED…HLVD), 275-312 (VNCL…LHTF), 318-370 (EIFQ…LFIH), and 377-404 (ISDF…IWQM). Position 95 is a phosphoserine (S95). K101 is covalently cross-linked (Glycyl lysine isopeptide (Lys-Gly) (interchain with G-Cter in SUMO2)). K119 carries the N6-acetyllysine modification. Residue K155 forms a Glycyl lysine isopeptide (Lys-Gly) (interchain with G-Cter in SUMO2) linkage. K159 is modified (N6-acetyllysine; alternate). Residue K159 forms a Glycyl lysine isopeptide (Lys-Gly) (interchain with G-Cter in SUMO2); alternate linkage. A Phosphoserine modification is found at S355.

This sequence belongs to the WD repeat RBAP46/RBAP48/MSI1 family. Binds directly to helix 1 of the histone fold of histone H4, a region that is not accessible when H4 is in chromatin. Subunit of the type B histone acetyltransferase (HAT) complex, composed of RBBP7 and HAT1. Subunit of the core histone deacetylase (HDAC) complex, which is composed of HDAC1, HDAC2, RBBP4 and RBBP7. The core HDAC complex associates with SIN3A, ARID4B/SAP180, SAP18, SAP30, SAP130, SUDS3/SAP45 and possibly ARID4A/RBP1 and ING1 to form the SIN3 HDAC complex. Component of the nucleosome remodeling and deacetylase (NuRD) repressor complex, composed of core proteins MTA1, MTA2, MTA3, RBBP4, RBBP7, HDAC1, HDAC2, MBD2, MBD3, and peripherally associated proteins CDK2AP1, CDK2AP2, GATAD2A, GATAD2B, CHD3, CHD4 and CHD5. The exact stoichiometry of the NuRD complex is unknown, and some subunits such as MBD2 and MBD3, GATAD2A and GATAD2B, and CHD3, CHD4 and CHD5 define mutually exclusive NuRD complexes. The NuRD complex may interact with MBD3L1. The NuRD complex may interact with MBD3L2. Subunit of the PRC2/EED-EZH2 complex, which is composed of at least EED, EZH2, RBBP4, RBBP7 and SUZ12. The PRC2/EED-EZH2 complex may also associate with HDAC1. Component of the NURF-1 ISWI chromatin remodeling complex (also called the nucleosome-remodeling factor (NURF) complex) at least composed of SMARCA1, BPTF, RBBP4 and RBBP7. Within the complex interacts with SMARCA1. Component of the BPFT-SMARCA1 complex at least composed of SMARCA1, BPFT, RBBP4 and RBBP7; the complex is catalytically inactive and does not remodel chromatin. Within the complex interacts with SMARCA1. Interacts with BRCA1. Interacts with CDK2AP1. Interacts with CENPA. Interacts with CHD3. Interacts with CHD4. Interacts with CREBBP, and this interaction may be enhanced by the binding of phosphorylated CREB1 to CREBBP. Interacts with HDAC7. Interacts with MTA1. Interacts with PWWP2B. Interacts with RB1 (via viral protein-binding domain). Interacts with SUV39H1.

It is found in the nucleus. Functionally, core histone-binding subunit that may target chromatin remodeling factors, histone acetyltransferases and histone deacetylases to their histone substrates in a manner that is regulated by nucleosomal DNA. Component of several complexes which regulate chromatin metabolism. These include the type B histone acetyltransferase (HAT) complex, which is required for chromatin assembly following DNA replication; the core histone deacetylase (HDAC) complex, which promotes histone deacetylation and consequent transcriptional repression; the nucleosome remodeling and histone deacetylase complex (the NuRD complex), which promotes transcriptional repression by histone deacetylation and nucleosome remodeling; and the PRC2/EED-EZH2 complex, which promotes repression of homeotic genes during development; and the NURF (nucleosome remodeling factor) complex. This is Histone-binding protein RBBP7 (RBBP7) from Pongo abelii (Sumatran orangutan).